The chain runs to 66 residues: Large ribosomal subunit protein uL29 (66 aa).

It belongs to the universal ribosomal protein uL29 family.

The protein is Large ribosomal subunit protein uL29 of Ruegeria pomeroyi (strain ATCC 700808 / DSM 15171 / DSS-3) (Silicibacter pomeroyi).